The following is a 400-amino-acid chain: NADH-quinone oxidoreductase subunit D (400 aa).

This sequence belongs to the complex I 49 kDa subunit family. As to quaternary structure, NDH-1 is composed of 14 different subunits. Subunits NuoB, C, D, E, F, and G constitute the peripheral sector of the complex.

The protein resides in the cell inner membrane. The enzyme catalyses a quinone + NADH + 5 H(+)(in) = a quinol + NAD(+) + 4 H(+)(out). NDH-1 shuttles electrons from NADH, via FMN and iron-sulfur (Fe-S) centers, to quinones in the respiratory chain. The immediate electron acceptor for the enzyme in this species is believed to be a menaquinone. Couples the redox reaction to proton translocation (for every two electrons transferred, four hydrogen ions are translocated across the cytoplasmic membrane), and thus conserves the redox energy in a proton gradient. The protein is NADH-quinone oxidoreductase subunit D of Chlorobium phaeobacteroides (strain DSM 266 / SMG 266 / 2430).